Reading from the N-terminus, the 1177-residue chain is DNA-directed RNA polymerase subunit beta (1177 aa).

Over residues 1147-1161 the composition is skewed to acidic residues; it reads DDTEIEMRDTEDDDD. The tract at residues 1147 to 1177 is disordered; it reads DDTEIEMRDTEDDDDHQSADKLNVEVETTKE. A compositionally biased stretch (basic and acidic residues) spans 1162-1177; that stretch reads HQSADKLNVEVETTKE.

This sequence belongs to the RNA polymerase beta chain family. The RNAP catalytic core consists of 2 alpha, 1 beta, 1 beta' and 1 omega subunit. When a sigma factor is associated with the core the holoenzyme is formed, which can initiate transcription.

It catalyses the reaction RNA(n) + a ribonucleoside 5'-triphosphate = RNA(n+1) + diphosphate. Its function is as follows. DNA-dependent RNA polymerase catalyzes the transcription of DNA into RNA using the four ribonucleoside triphosphates as substrates. The sequence is that of DNA-directed RNA polymerase subunit beta from Bacillus anthracis (strain A0248).